Here is a 182-residue protein sequence, read N- to C-terminus: ATP synthase subunit b (182 aa).

The helical transmembrane segment at 25–45 (VVLAGFAVLFYIVVKFVVPMF) threads the bilayer.

The protein belongs to the ATPase B chain family. As to quaternary structure, F-type ATPases have 2 components, F(1) - the catalytic core - and F(0) - the membrane proton channel. F(1) has five subunits: alpha(3), beta(3), gamma(1), delta(1), epsilon(1). F(0) has three main subunits: a(1), b(2) and c(10-14). The alpha and beta chains form an alternating ring which encloses part of the gamma chain. F(1) is attached to F(0) by a central stalk formed by the gamma and epsilon chains, while a peripheral stalk is formed by the delta and b chains.

It localises to the cell membrane. F(1)F(0) ATP synthase produces ATP from ADP in the presence of a proton or sodium gradient. F-type ATPases consist of two structural domains, F(1) containing the extramembraneous catalytic core and F(0) containing the membrane proton channel, linked together by a central stalk and a peripheral stalk. During catalysis, ATP synthesis in the catalytic domain of F(1) is coupled via a rotary mechanism of the central stalk subunits to proton translocation. In terms of biological role, component of the F(0) channel, it forms part of the peripheral stalk, linking F(1) to F(0). This is ATP synthase subunit b from Arthrobacter sp. (strain FB24).